Here is a 519-residue protein sequence, read N- to C-terminus: Amphoterin-induced protein 2 (519 aa).

A signal peptide spans 1-38 (MSLRFHTLPTLPRAVKPGCRELLCLLVIAVMVSPSASG). The LRRNT domain maps to 39-67 (MCPTACICATDIVSCTNKNLSKVPGNLFR). The Extracellular segment spans residues 39 to 397 (MCPTACICAT…RSHAHEAFNT (359 aa)). 2 disulfide bridges follow: Cys-40-Cys-46 and Cys-44-Cys-53. A glycan (N-linked (GlcNAc...) asparagine) is linked at Asn-57. LRR repeat units follow at residues 68–89 (LIKRLDLSYNRIGLLDADWIPV), 93–114 (KLSTLILRHNNITSISTGSFST), 117–138 (NLKCLDLSSNRLKSVKSATFQE), 141–162 (ALEVLLLYNNHISYLDPAAFGG), 165–186 (HLQKLYLSGNFLTQFPMDLYTG), and 192–213 (DLTFLDVSYNRIPSIPMHHINL). The N-linked (GlcNAc...) asparagine glycan is linked to Asn-103. The 57-residue stretch at 227–283 (NPFVCDCSLYSLLIFWYRRHFSSVMDFKNDYTCRLWSDSRHSHQLQLLQESFLNCSY) folds into the LRRCT domain. 2 disulfides stabilise this stretch: Cys-231-Cys-259 and Cys-233-Cys-281. N-linked (GlcNAc...) asparagine glycans are attached at residues Asn-280, Asn-287, Asn-344, Asn-372, Asn-380, Asn-383, and Asn-387. The 91-residue stretch at 288–378 (GSFHALGFIH…RLLNETVDIM (91 aa)) folds into the Ig-like C2-type domain. The cysteines at positions 309 and 362 are disulfide-linked. Residues 398-418 (AFTTLAACVASIVLVLLYLYL) form a helical membrane-spanning segment. Residues 419–519 (TPCPCKCKAK…FSDTPFVAST (101 aa)) are Cytoplasmic-facing. The disordered stretch occupies residues 498 to 519 (RAKSDSDSVNSVFSDTPFVAST).

This sequence belongs to the immunoglobulin superfamily. AMIGO family. Binds itself as well as AMIGO1 and AMIGO3. Highest level in cerebellum, retina, liver, and lung. Lower levels in cerebrum, kidney, small intestine, spleen and testis.

Its subcellular location is the cell membrane. The protein localises to the nucleus. Required for depolarization-dependent survival of cultured cerebellar granule neurons. May mediate homophilic as well as heterophilic cell-cell interaction with AMIGO1 or AMIGO3. May contribute to signal transduction through its intracellular domain. This is Amphoterin-induced protein 2 from Mus musculus (Mouse).